Here is a 441-residue protein sequence, read N- to C-terminus: Dihydroorotase (441 aa).

Residues His-77 and His-79 each contribute to the Zn(2+) site. Residues 79-81 and Asn-111 each bind substrate; that span reads HFR. 3 residues coordinate Zn(2+): Asp-167, His-194, and His-248. Asn-294 is a substrate binding site. Residue Asp-321 coordinates Zn(2+). Asp-321 is a catalytic residue. Residues His-325 and 339–340 contribute to the substrate site; that span reads FG.

The protein belongs to the metallo-dependent hydrolases superfamily. DHOase family. Class I DHOase subfamily. Zn(2+) is required as a cofactor.

The catalysed reaction is (S)-dihydroorotate + H2O = N-carbamoyl-L-aspartate + H(+). It functions in the pathway pyrimidine metabolism; UMP biosynthesis via de novo pathway; (S)-dihydroorotate from bicarbonate: step 3/3. Functionally, catalyzes the reversible cyclization of carbamoyl aspartate to dihydroorotate. This Wolbachia sp. subsp. Drosophila simulans (strain wRi) protein is Dihydroorotase.